Reading from the N-terminus, the 204-residue chain is uncharacterized protein (204 aa).

It is found in the mitochondrion. This is an uncharacterized protein from Arabidopsis thaliana (Mouse-ear cress).